The following is a 182-amino-acid chain: PTS system glucitol/sorbitol-specific EIIC component (182 aa).

One can recognise a PTS EIIC type-5 domain in the interval 1 to 182 (MDAIVYFAKG…IELSNQLKAN (182 aa)). A run of 3 helical transmembrane segments spans residues 28-48 (GIIP…AFIG), 63-83 (VILA…NPMA), and 139-159 (TALG…AGWV).

It is found in the cell membrane. Functionally, the phosphoenolpyruvate-dependent sugar phosphotransferase system (PTS), a major carbohydrate active transport system, catalyzes the phosphorylation of incoming sugar substrates concomitant with their translocation across the cell membrane. The enzyme II complex composed of SrlA, SrlB and SrlE is involved in glucitol/sorbitol transport. This Clostridium beijerinckii (strain ATCC 51743 / NCIMB 8052) (Clostridium acetobutylicum) protein is PTS system glucitol/sorbitol-specific EIIC component (srlA).